We begin with the raw amino-acid sequence, 139 residues long: Large-conductance mechanosensitive channel (139 aa).

The next 3 helical transmembrane spans lie at 16–36 (VIDL…VKAL), 40–60 (IVMP…LAWV), and 79–99 (GAFI…FMLV).

It belongs to the MscL family. As to quaternary structure, homopentamer.

Its subcellular location is the cell inner membrane. Channel that opens in response to stretch forces in the membrane lipid bilayer. May participate in the regulation of osmotic pressure changes within the cell. The chain is Large-conductance mechanosensitive channel from Phenylobacterium zucineum (strain HLK1).